Reading from the N-terminus, the 620-residue chain is Proline--tRNA ligase (620 aa).

Belongs to the class-II aminoacyl-tRNA synthetase family. ProS type 1 subfamily. Homodimer.

The protein localises to the cytoplasm. The enzyme catalyses tRNA(Pro) + L-proline + ATP = L-prolyl-tRNA(Pro) + AMP + diphosphate. Catalyzes the attachment of proline to tRNA(Pro) in a two-step reaction: proline is first activated by ATP to form Pro-AMP and then transferred to the acceptor end of tRNA(Pro). As ProRS can inadvertently accommodate and process non-cognate amino acids such as alanine and cysteine, to avoid such errors it has two additional distinct editing activities against alanine. One activity is designated as 'pretransfer' editing and involves the tRNA(Pro)-independent hydrolysis of activated Ala-AMP. The other activity is designated 'posttransfer' editing and involves deacylation of mischarged Ala-tRNA(Pro). The misacylated Cys-tRNA(Pro) is not edited by ProRS. This Streptococcus thermophilus (strain CNRZ 1066) protein is Proline--tRNA ligase.